The sequence spans 92 residues: Small ribosomal subunit protein bS20 (92 aa).

The disordered stretch occupies residues Met-1–Arg-25.

It belongs to the bacterial ribosomal protein bS20 family.

Its function is as follows. Binds directly to 16S ribosomal RNA. This Burkholderia mallei (strain NCTC 10247) protein is Small ribosomal subunit protein bS20.